Consider the following 293-residue polypeptide: Pyridoxal 5'-phosphate synthase subunit PdxS (293 aa).

Asp23 lines the D-ribose 5-phosphate pocket. Lys80 acts as the Schiff-base intermediate with D-ribose 5-phosphate in catalysis. Gly152 serves as a coordination point for D-ribose 5-phosphate. D-glyceraldehyde 3-phosphate is bound at residue Arg164. D-ribose 5-phosphate contacts are provided by residues Gly213 and 234-235 (GS).

This sequence belongs to the PdxS/SNZ family. In the presence of PdxT, forms a dodecamer of heterodimers.

The catalysed reaction is aldehydo-D-ribose 5-phosphate + D-glyceraldehyde 3-phosphate + L-glutamine = pyridoxal 5'-phosphate + L-glutamate + phosphate + 3 H2O + H(+). Its pathway is cofactor biosynthesis; pyridoxal 5'-phosphate biosynthesis. Catalyzes the formation of pyridoxal 5'-phosphate from ribose 5-phosphate (RBP), glyceraldehyde 3-phosphate (G3P) and ammonia. The ammonia is provided by the PdxT subunit. Can also use ribulose 5-phosphate and dihydroxyacetone phosphate as substrates, resulting from enzyme-catalyzed isomerization of RBP and G3P, respectively. The protein is Pyridoxal 5'-phosphate synthase subunit PdxS of Roseiflexus castenholzii (strain DSM 13941 / HLO8).